A 263-amino-acid chain; its full sequence is MASSDGSDVETQSLLNSGDRTLRSWKDTVFPGISWDKSIVWITVAQIIMYIISCVLSRSYEPNERTLMLLGAAYAPAFSNFQLWRVVTPLFLHATILHLVLNLVFILHISLRLEERYGTKKFLVTYFLSAIVGNLLSMLMQPWALSVGASTAGFGIIGGMAAEVSVVWCKLSEELKRIYSMDICILAVLIYFLSFGRTVDTFGHLGGFLAGVALVCYYNKEIEDLPKWFRVLFYGCSALCATILVVSPPLLLLRYPYRVAATS.

The next 6 membrane-spanning stretches (helical) occupy residues 37 to 57 (KSIV…CVLS), 86 to 106 (VVTP…LVFI), 121 to 141 (KFLV…MLMQ), 142 to 162 (PWAL…GMAA), 189 to 209 (LIYF…GGFL), and 231 to 251 (VLFY…PPLL). The Nucleophile role is filled by S150. The active site involves H204.

Belongs to the peptidase S54 family.

It is found in the membrane. The enzyme catalyses Cleaves type-1 transmembrane domains using a catalytic dyad composed of serine and histidine that are contributed by different transmembrane domains.. Functionally, serine protease involved in intramembrane proteolysis and the subsequent release of polypeptides from their membrane anchors. The polypeptide is Rhomboid-like protease 3 (ROM3) (Toxoplasma gondii).